The primary structure comprises 98 residues: NADH-ubiquinone oxidoreductase chain 4L (98 aa).

3 helical membrane passes run 1–21 (MTPV…GLAF), 29–49 (ALLC…LWAL), and 58–78 (VAPM…LALL).

Belongs to the complex I subunit 4L family.

The protein localises to the mitochondrion membrane. It carries out the reaction a ubiquinone + NADH + 5 H(+)(in) = a ubiquinol + NAD(+) + 4 H(+)(out). Core subunit of the mitochondrial membrane respiratory chain NADH dehydrogenase (Complex I) which catalyzes electron transfer from NADH through the respiratory chain, using ubiquinone as an electron acceptor. Part of the enzyme membrane arm which is embedded in the lipid bilayer and involved in proton translocation. In Oncorhynchus clarkii (Cutthroat trout), this protein is NADH-ubiquinone oxidoreductase chain 4L (MT-ND4L).